Reading from the N-terminus, the 235-residue chain is Proteasome subunit alpha type-2-A (235 aa).

Lysine 64 participates in a covalent cross-link: Glycyl lysine isopeptide (Lys-Gly) (interchain with G-Cter in ubiquitin).

Belongs to the peptidase T1A family. In terms of assembly, component of the 20S core complex of the 26S proteasome. The 26S proteasome is composed of a core protease (CP), known as the 20S proteasome, capped at one or both ends by the 19S regulatory particle (RP/PA700). The 20S proteasome core is composed of 28 subunits that are arranged in four stacked rings, resulting in a barrel-shaped structure. The two end rings are each formed by seven alpha subunits, and the two central rings are each formed by seven beta subunits. The catalytic chamber with the active sites is on the inside of the barrel.

The protein localises to the cytoplasm. The protein resides in the nucleus. Its function is as follows. The proteasome is a multicatalytic proteinase complex which is characterized by its ability to cleave peptides with Arg, Phe, Tyr, Leu, and Glu adjacent to the leaving group at neutral or slightly basic pH. The proteasome has an ATP-dependent proteolytic activity. In Arabidopsis thaliana (Mouse-ear cress), this protein is Proteasome subunit alpha type-2-A (PAB1).